Reading from the N-terminus, the 442-residue chain is Probable D-serine dehydratase (442 aa).

Lys-111 carries the N6-(pyridoxal phosphate)lysine modification.

It belongs to the serine/threonine dehydratase family. DsdA subfamily. It depends on pyridoxal 5'-phosphate as a cofactor.

It carries out the reaction D-serine = pyruvate + NH4(+). This chain is Probable D-serine dehydratase, found in Sinorhizobium medicae (strain WSM419) (Ensifer medicae).